The following is a 456-amino-acid chain: Bifunctional protein GlmU (456 aa).

The pyrophosphorylase stretch occupies residues 1–228; it reads MPQNTLNTVI…SHLAAGVNNK (228 aa). Residues 11–14, K25, Q75, 80–81, 102–104, G138, E153, N168, and N226 contribute to the UDP-N-acetyl-alpha-D-glucosamine site; these read LAAG, GT, and YGD. Mg(2+) is bound at residue D104. N226 is a Mg(2+) binding site. Positions 229–249 are linker; sequence RQLAELERIFQTEQAQELLKA. An N-acetyltransferase region spans residues 250-456; that stretch reads GVTLRDPARF…GWVRPEKNKQ (207 aa). 2 residues coordinate UDP-N-acetyl-alpha-D-glucosamine: R332 and K350. Catalysis depends on H362, which acts as the Proton acceptor. Residues Y365 and N376 each coordinate UDP-N-acetyl-alpha-D-glucosamine. Acetyl-CoA-binding positions include A379, 385–386, S404, A422, and R439; that span reads NY.

It in the N-terminal section; belongs to the N-acetylglucosamine-1-phosphate uridyltransferase family. The protein in the C-terminal section; belongs to the transferase hexapeptide repeat family. In terms of assembly, homotrimer. Mg(2+) serves as cofactor.

It is found in the cytoplasm. It catalyses the reaction alpha-D-glucosamine 1-phosphate + acetyl-CoA = N-acetyl-alpha-D-glucosamine 1-phosphate + CoA + H(+). The enzyme catalyses N-acetyl-alpha-D-glucosamine 1-phosphate + UTP + H(+) = UDP-N-acetyl-alpha-D-glucosamine + diphosphate. Its pathway is nucleotide-sugar biosynthesis; UDP-N-acetyl-alpha-D-glucosamine biosynthesis; N-acetyl-alpha-D-glucosamine 1-phosphate from alpha-D-glucosamine 6-phosphate (route II): step 2/2. The protein operates within nucleotide-sugar biosynthesis; UDP-N-acetyl-alpha-D-glucosamine biosynthesis; UDP-N-acetyl-alpha-D-glucosamine from N-acetyl-alpha-D-glucosamine 1-phosphate: step 1/1. It participates in bacterial outer membrane biogenesis; LPS lipid A biosynthesis. Catalyzes the last two sequential reactions in the de novo biosynthetic pathway for UDP-N-acetylglucosamine (UDP-GlcNAc). The C-terminal domain catalyzes the transfer of acetyl group from acetyl coenzyme A to glucosamine-1-phosphate (GlcN-1-P) to produce N-acetylglucosamine-1-phosphate (GlcNAc-1-P), which is converted into UDP-GlcNAc by the transfer of uridine 5-monophosphate (from uridine 5-triphosphate), a reaction catalyzed by the N-terminal domain. The chain is Bifunctional protein GlmU from Neisseria gonorrhoeae.